The following is a 1485-amino-acid chain: Chromosome partition protein MukB (1485 aa).

Position 34–41 (34–41 (GGNGAGKS)) interacts with ATP. Coiled-coil stretches lie at residues 337 to 480 (LNLV…QAYQ), 509 to 605 (QHLA…PVWL), 780 to 805 (RAAR…ATLS), 835 to 915 (EAEI…IQQH), 977 to 1116 (GMLT…AKAG), and 1210 to 1235 (EAIE…KLAI). Residues 666 to 783 (PSGAEDARLI…EVPLFGRAAR (118 aa)) form a flexible hinge region.

Belongs to the SMC family. MukB subfamily. As to quaternary structure, homodimerization via its hinge domain. Binds to DNA via its C-terminal region. Interacts, and probably forms a ternary complex, with MukE and MukF via its C-terminal region. The complex formation is stimulated by calcium or magnesium. Interacts with tubulin-related protein FtsZ.

It is found in the cytoplasm. Its subcellular location is the nucleoid. In terms of biological role, plays a central role in chromosome condensation, segregation and cell cycle progression. Functions as a homodimer, which is essential for chromosome partition. Involved in negative DNA supercoiling in vivo, and by this means organize and compact chromosomes. May achieve or facilitate chromosome segregation by condensation DNA from both sides of a centrally located replisome during cell division. The protein is Chromosome partition protein MukB of Yersinia pseudotuberculosis serotype O:1b (strain IP 31758).